Here is a 282-residue protein sequence, read N- to C-terminus: Benzoyl-CoA reductase subunit D (282 aa).

Residues Cys-130 and Cys-169 each contribute to the [4Fe-4S] cluster site.

As to quaternary structure, heterotetramer composed of A, B, C, and D subunits. The cofactor is [4Fe-4S] cluster.

The enzyme catalyses cyclohexa-1,5-diene-1-carbonyl-CoA + oxidized 2[4Fe-4S]-[ferredoxin] + 2 ADP + 2 phosphate = reduced 2[4Fe-4S]-[ferredoxin] + benzoyl-CoA + 2 ATP + 2 H2O. The catalysed reaction is 3-hydroxybenzoyl-CoA + AH2 + 2 ATP + 2 H2O = 3-hydroxycyclohexa-1,5-diene-1-carbonyl-CoA + A + 2 ADP + 2 phosphate + 2 H(+). Functionally, catalyzes the anaerobic reduction of benzoyl-CoA and 3-hydroxybenzoyl-CoA to form cyclohexa-1,5-diene-1-carbonyl-CoA and 3-hydroxycyclohexa-1,5-diene-1-carbonyl-CoA, respectively. The enzyme also reduces other benzoyl-CoA analogs with small substituents at the aromatic ring. The polypeptide is Benzoyl-CoA reductase subunit D (bcrD) (Thauera aromatica).